A 176-amino-acid chain; its full sequence is Small ribosomal subunit protein uS5 (176 aa).

In terms of domain architecture, S5 DRBM spans 18–81; that stretch reads FEEKMLFVNR…SIARKNMISV (64 aa).

This sequence belongs to the universal ribosomal protein uS5 family. In terms of assembly, part of the 30S ribosomal subunit. Contacts proteins S4 and S8.

With S4 and S12 plays an important role in translational accuracy. Its function is as follows. Located at the back of the 30S subunit body where it stabilizes the conformation of the head with respect to the body. This Deinococcus deserti (strain DSM 17065 / CIP 109153 / LMG 22923 / VCD115) protein is Small ribosomal subunit protein uS5.